The following is a 265-amino-acid chain: Cell division protein DivIB (265 aa).

The Cytoplasmic portion of the chain corresponds to methionine 1–arginine 30. A helical membrane pass occupies residues leucine 31–proline 51. Residues leucine 52–serine 265 are Extracellular-facing. One can recognise a POTRA domain in the interval serine 53–tyrosine 121.

The protein belongs to the FtsQ/DivIB family. DivIB subfamily.

The protein localises to the cell membrane. Functionally, cell division protein that may be involved in stabilizing or promoting the assembly of the division complex. This is Cell division protein DivIB from Bacillus anthracis.